Here is a 335-residue protein sequence, read N- to C-terminus: MSLDINQIALHQLIKRDEQNLELVLRDSLLEPTTTVVEMVAELHRVYSAKNKAYGLFSEESELAQALRLQRQGEEDFLAFSRAATGRLRDELAKYPFADGGIVLFCHYRYLAVEYLLVTVLNNLSSMRVNENLDINPTHYLDINHADIVARIDLTEWETNPQSTRYLTFLKGRVGRKVADFFMDFLGASEGLNAKAQNRGLLQAVDDFTAEAQLDKAERQNVRQQVYSYCNEQLQAGEEIELESLSKELSGVSEVSFSEFTAEKGYELEESFPADRSTLRQLTKYAGSGGGLTINFDAMLLGERIFWDPATDTLTIKGTPPNLRDQLQRRTSGGK.

The protein belongs to the YejK family.

It localises to the cytoplasm. The protein resides in the nucleoid. The sequence is that of Nucleoid-associated protein YejK from Salmonella schwarzengrund (strain CVM19633).